The sequence spans 155 residues: Probable calcium-binding protein CML44 (155 aa).

3 consecutive EF-hand domains span residues 6 to 41, 85 to 120, and 130 to 155; these read ITTN…LGWA, DNDE…LGFE, and RMIR…ILHV. The Ca(2+) site is built by Asp19, Asn21, Asp23, Glu30, Asp98, Asn100, Asp102, Tyr104, and Glu109.

Its function is as follows. Potential calcium sensor. The chain is Probable calcium-binding protein CML44 (CML44) from Arabidopsis thaliana (Mouse-ear cress).